The following is a 193-amino-acid chain: MKIGILALQGAFAEHAKVLDQLGVESVELRNLDDFQQDQSDLSGLILPGGESTTMGKLLRDQNMLLPIREAILSGLPVFGTCAGLILLAKEITSQKESHLGTMDMVVERNAYGRQLGSFYTEAECKGVGKIPMTFIRGPIISSVGEGVEILAIVNNQIVAAQEKNMLVSSFHPELTDDVRLHQYFINMCKEKS.

50 to 52 lines the L-glutamine pocket; sequence GES. Cysteine 82 acts as the Nucleophile in catalysis. L-glutamine contacts are provided by residues arginine 109 and 136-137; that span reads IR. Residues histidine 172 and glutamate 174 each act as charge relay system in the active site.

Belongs to the glutaminase PdxT/SNO family. In the presence of PdxS, forms a dodecamer of heterodimers. Only shows activity in the heterodimer.

The enzyme catalyses aldehydo-D-ribose 5-phosphate + D-glyceraldehyde 3-phosphate + L-glutamine = pyridoxal 5'-phosphate + L-glutamate + phosphate + 3 H2O + H(+). It catalyses the reaction L-glutamine + H2O = L-glutamate + NH4(+). The protein operates within cofactor biosynthesis; pyridoxal 5'-phosphate biosynthesis. Catalyzes the hydrolysis of glutamine to glutamate and ammonia as part of the biosynthesis of pyridoxal 5'-phosphate. The resulting ammonia molecule is channeled to the active site of PdxS. The sequence is that of Pyridoxal 5'-phosphate synthase subunit PdxT from Streptococcus pneumoniae serotype 2 (strain D39 / NCTC 7466).